Consider the following 563-residue polypeptide: Nigrin b (563 aa).

A signal peptide spans 1 to 25 (MRVVAAAMLYFYIVVLAICSVGIQG). E188 is a catalytic residue. N-linked (GlcNAc...) asparagine glycosylation is present at N221. 3 disulfides stabilise this stretch: C274–C302, C319–C338, and C360–C377. Ricin B-type lectin domains lie at 305–431 (RTSF…WTVT) and 434–559 (VKPI…WVTQ). Residues 316-356 (DGLCVDVRNGYDTDGTPLQLWPCGTQRNQRWTFDSDDTIRS) form a 1-alpha repeat. The stretch at 357–397 (MGKCMTANGLNNGSNIVIFNCSTAAENAIKWEVPIDGSIIN) is one 1-beta repeat. N-linked (GlcNAc...) asparagine glycosylation is found at N368 and N376. Residues 400-432 (SGLVMTAPRAASRTILLLEDNIYAASQGWTVTN) form a 1-gamma repeat. Residues 445–482 (KEMCLQSNGENNGVWMEDCEATSLQQQWALYGDRTIRV) form a 2-alpha repeat. C448 and C463 form a disulfide bridge. N483 carries N-linked (GlcNAc...) asparagine glycosylation. Residues 486 to 524 (RGLCVTTNGYNSKDLIIILKCQGLPSQRWFFNSDGAIVN) form a 2-beta repeat. C489 and C506 are oxidised to a cystine. A 2-gamma repeat occupies 527–554 (SRHVMDVRASNVSLREIIIFPATGNPNQ). Residue N537 is glycosylated (N-linked (GlcNAc...) asparagine).

It in the N-terminal section; belongs to the ribosome-inactivating protein family. Type 2 RIP subfamily. In terms of assembly, disulfide-linked dimer of A and B chains.

It catalyses the reaction Endohydrolysis of the N-glycosidic bond at one specific adenosine on the 28S rRNA.. Non-toxic type 2 RIP which strongly inhibits mammalian protein synthesis but does not affect plant nor bacterial protein synthesis. The A chain is responsible for inhibiting protein synthesis through the catalytic inactivation of 60S ribosomal subunits by removing adenine from position 4,324 of 28S rRNA. Its function is as follows. The B chain is a galactose-specific lectin that facilitates the binding of nigrin b to the cell membrane that precedes endocytosis. The chain is Nigrin b from Sambucus nigra (European elder).